Consider the following 331-residue polypeptide: tRNA N6-adenosine threonylcarbamoyltransferase (331 aa).

Residues H109, H113, and Y130 each contribute to the Fe cation site. Substrate-binding positions include 130-134 (YLSGG), D162, D183, and S262. D290 contributes to the Fe cation binding site.

The protein belongs to the KAE1 / TsaD family. Requires Fe(2+) as cofactor.

The protein localises to the cytoplasm. It catalyses the reaction L-threonylcarbamoyladenylate + adenosine(37) in tRNA = N(6)-L-threonylcarbamoyladenosine(37) in tRNA + AMP + H(+). In terms of biological role, required for the formation of a threonylcarbamoyl group on adenosine at position 37 (t(6)A37) in tRNAs that read codons beginning with adenine. Is probably involved in the transfer of the threonylcarbamoyl moiety of threonylcarbamoyl-AMP (TC-AMP) to the N6 group of A37. This Saccharolobus islandicus (strain M.16.27) (Sulfolobus islandicus) protein is tRNA N6-adenosine threonylcarbamoyltransferase.